A 130-amino-acid polypeptide reads, in one-letter code: Small ribosomal subunit protein uS9 (130 aa).

This sequence belongs to the universal ribosomal protein uS9 family.

The sequence is that of Small ribosomal subunit protein uS9 from Yersinia pseudotuberculosis serotype O:1b (strain IP 31758).